We begin with the raw amino-acid sequence, 1194 residues long: Cohesin subunit SA-2 (1194 aa).

Residues 224 to 309 (FVHRYRDAIA…SRFKDRIVSM (86 aa)) enclose the SCD domain. A disordered region spans residues 986 to 1027 (DTMSVMSGMSGRGSSTRSKKIKPPTGKRKLPEAEESSSSDSM). The segment covering 988–1001 (MSVMSGMSGRGSST) has biased composition (low complexity). Over residues 1002 to 1013 (RSKKIKPPTGKR) the composition is skewed to basic residues.

This sequence belongs to the SCC3 family. Part of the cohesin complex which is composed of a heterodimer between a SMC1 protein (SMC1A or SMC1B) and SMC3, which are attached via their hinge domain, and RAD21 which link them at their heads, and one STAG protein (STAG1, STAG2 or STAG3). In cohesin complexes, STAG2 is mutually exclusive with STAG1 and STAG3. Interacts directly with RAD21 in cohesin complex. Phosphorylated by PLK1. The large dissociation of cohesin from chromosome arms during prophase is partly due to its phosphorylation.

The protein resides in the nucleus. It is found in the chromosome. It localises to the centromere. In terms of biological role, component of cohesin complex, a complex required for the cohesion of sister chromatids after DNA replication. The cohesin complex apparently forms a large proteinaceous ring within which sister chromatids can be trapped. At anaphase, the complex is cleaved and dissociates from chromatin, allowing sister chromatids to segregate. The cohesin complex may also play a role in spindle pole assembly during mitosis. This Xenopus laevis (African clawed frog) protein is Cohesin subunit SA-2 (stag2).